Here is a 95-residue protein sequence, read N- to C-terminus: Large ribosomal subunit protein eL43 (95 aa).

A C4-type zinc finger spans residues 38-59; the sequence is CPDCGSEAVSREGTGIWQCGKC.

The protein belongs to the eukaryotic ribosomal protein eL43 family. Requires Zn(2+) as cofactor.

The chain is Large ribosomal subunit protein eL43 from Halobacterium salinarum (strain ATCC 29341 / DSM 671 / R1).